Here is a 177-residue protein sequence, read N- to C-terminus: Ribosome maturation factor RimM (177 aa).

A PRC barrel domain is found at 100–177 (EDEYYWSDLV…TVLVAWPSDY (78 aa)).

Belongs to the RimM family. As to quaternary structure, binds ribosomal protein uS19.

The protein resides in the cytoplasm. Its function is as follows. An accessory protein needed during the final step in the assembly of 30S ribosomal subunit, possibly for assembly of the head region. Essential for efficient processing of 16S rRNA. May be needed both before and after RbfA during the maturation of 16S rRNA. It has affinity for free ribosomal 30S subunits but not for 70S ribosomes. This Psychrobacter cryohalolentis (strain ATCC BAA-1226 / DSM 17306 / VKM B-2378 / K5) protein is Ribosome maturation factor RimM.